Here is a 362-residue protein sequence, read N- to C-terminus: MSKNIVVLPGDHVGQEIAQEAIKVLEAISEVSPKAKFNFQHHLIGGSAIDATGSPLPDEALAAAKKADAVLLGAVGGPKWGTGAVRPEQGLLKIRKELQLYANLRPCNFASESLLELSPLKPQHARGTDFIVVRELVGGIYFGQRKEDDGDGVAWDSERYTKPEVQRITRMAAFLALQHNPPLPIWSLDKANVLASSRLWRKTVEETIKNEFPQLTVKHQLIDSAAMILIKNPTQLNGIIITSNMFEDIISDEASVIPGSLGLLPSASLASLPDTNEAFGLYEPCHGSAPDLPKGKVNPVAMILSAAMMLKLSLNMAKEGEALETAVKQVLDSGVRTGDLGGSNSTSEVGDAIAKAVKQILA.

77–88 provides a ligand contact to NAD(+); that stretch reads GPKWGTGAVRPE. Positions 95, 105, 134, and 223 each coordinate substrate. Mg(2+) contacts are provided by aspartate 223, aspartate 248, and aspartate 252. NAD(+) is bound at residue 287–298; it reads GSAPDLPKGKVN.

It belongs to the isocitrate and isopropylmalate dehydrogenases family. As to quaternary structure, homodimer. Mg(2+) serves as cofactor. It depends on Mn(2+) as a cofactor.

Its subcellular location is the cytoplasm. It catalyses the reaction (2R,3S)-3-isopropylmalate + NAD(+) = 4-methyl-2-oxopentanoate + CO2 + NADH. Its pathway is amino-acid biosynthesis; L-leucine biosynthesis; L-leucine from 3-methyl-2-oxobutanoate: step 3/4. In terms of biological role, catalyzes the oxidation of 3-carboxy-2-hydroxy-4-methylpentanoate (3-isopropylmalate) to 3-carboxy-4-methyl-2-oxopentanoate. The product decarboxylates to 4-methyl-2 oxopentanoate. The polypeptide is 3-isopropylmalate dehydrogenase (LEU2) (Zygosaccharomyces bailii).